Here is a 327-residue protein sequence, read N- to C-terminus: Lipoyl synthase (327 aa).

7 residues coordinate [4Fe-4S] cluster: C72, C77, C83, C98, C102, C105, and S313. The Radical SAM core domain maps to 83-302; the sequence is CWSHGTATIM…RRVGLEKGFL (220 aa).

This sequence belongs to the radical SAM superfamily. Lipoyl synthase family. [4Fe-4S] cluster is required as a cofactor.

It is found in the cytoplasm. The enzyme catalyses [[Fe-S] cluster scaffold protein carrying a second [4Fe-4S](2+) cluster] + N(6)-octanoyl-L-lysyl-[protein] + 2 oxidized [2Fe-2S]-[ferredoxin] + 2 S-adenosyl-L-methionine + 4 H(+) = [[Fe-S] cluster scaffold protein] + N(6)-[(R)-dihydrolipoyl]-L-lysyl-[protein] + 4 Fe(3+) + 2 hydrogen sulfide + 2 5'-deoxyadenosine + 2 L-methionine + 2 reduced [2Fe-2S]-[ferredoxin]. Its pathway is protein modification; protein lipoylation via endogenous pathway; protein N(6)-(lipoyl)lysine from octanoyl-[acyl-carrier-protein]: step 2/2. Functionally, catalyzes the radical-mediated insertion of two sulfur atoms into the C-6 and C-8 positions of the octanoyl moiety bound to the lipoyl domains of lipoate-dependent enzymes, thereby converting the octanoylated domains into lipoylated derivatives. The sequence is that of Lipoyl synthase from Francisella philomiragia subsp. philomiragia (strain ATCC 25017 / CCUG 19701 / FSC 153 / O#319-036).